The following is a 272-amino-acid chain: Glutamate racemase (272 aa).

Substrate is bound by residues 13–14 and 45–46; these read DS and YG. The Proton donor/acceptor role is filled by Cys76. Residue 77–78 coordinates substrate; sequence NT. Residue Cys186 is the Proton donor/acceptor of the active site. Residue 187-188 participates in substrate binding; sequence TH.

This sequence belongs to the aspartate/glutamate racemases family.

The enzyme catalyses L-glutamate = D-glutamate. The protein operates within cell wall biogenesis; peptidoglycan biosynthesis. Its function is as follows. Provides the (R)-glutamate required for cell wall biosynthesis. This is Glutamate racemase from Cupriavidus pinatubonensis (strain JMP 134 / LMG 1197) (Cupriavidus necator (strain JMP 134)).